A 316-amino-acid polypeptide reads, in one-letter code: Na(+)/H(+) exchange regulatory cofactor NHE-RF2 (316 aa).

The 81-residue stretch at 11-91 (LCRLVRGEQG…ETRLLVVDKE (81 aa)) folds into the PDZ 1 domain. Residues 109-148 (QRGLPPAHDPWEPKPDWARAGSLSSDAGQKDVNGPPRELR) form a disordered region. 3 positions are modified to phosphoserine: Ser-130, Ser-183, and Ser-254. The region spanning 151-231 (LCHLRKGPQG…EARLLLVDPE (81 aa)) is the PDZ 2 domain. Residues 244 to 303 (TEEHVEGPLPSPITNGTSPAQDASAWKRDPFQESGLHLSPTAAEAKEKARATRVNKRAPQ) are disordered. The span at 255–264 (PITNGTSPAQ) shows a compositional bias: polar residues. Ser-282 is subject to Phosphoserine.

As to quaternary structure, homodimer, and heterodimer with NHERF1. Binds ADRB2, SLC9A3, P2RY1, P2YR2, SRY, RDX, PDZK1 and LPAR2. Found in a complex with EZR, PODXL and NHERF2. Interacts (via the PDZ domains) with PODXL (via the C-terminal PDZ-binding motif DTHL); interaction is detected in glomerular epithelium cells. Binds PODXL. Interacts with SGK1 and KCNJ1/ROMK1. Interacts (via the PDZ domains) with SLC26A6. In terms of tissue distribution, detected in kidney glomeruli.

The protein localises to the endomembrane system. It is found in the nucleus. Its subcellular location is the apical cell membrane. Scaffold protein that connects plasma membrane proteins with members of the ezrin/moesin/radixin family and thereby helps to link them to the actin cytoskeleton and to regulate their surface expression. Necessary for cAMP-mediated phosphorylation and inhibition of SLC9A3. May also act as scaffold protein in the nucleus. The protein is Na(+)/H(+) exchange regulatory cofactor NHE-RF2 (NHERF2) of Oryctolagus cuniculus (Rabbit).